Here is a 500-residue protein sequence, read N- to C-terminus: Glycerol kinase (500 aa).

Residue Thr12 participates in ADP binding. The ATP site is built by Thr12, Thr13, and Ser14. Thr12 provides a ligand contact to sn-glycerol 3-phosphate. Arg16 contacts ADP. Sn-glycerol 3-phosphate-binding residues include Arg82, Glu83, Tyr134, and Asp243. Glycerol is bound by residues Arg82, Glu83, Tyr134, Asp243, and Gln244. Positions 265 and 308 each coordinate ADP. ATP is bound by residues Thr265, Gly308, Gln312, and Gly411. Residue Gly411 coordinates ADP.

This sequence belongs to the FGGY kinase family.

It catalyses the reaction glycerol + ATP = sn-glycerol 3-phosphate + ADP + H(+). It functions in the pathway polyol metabolism; glycerol degradation via glycerol kinase pathway; sn-glycerol 3-phosphate from glycerol: step 1/1. Its activity is regulated as follows. Inhibited by fructose 1,6-bisphosphate (FBP). Key enzyme in the regulation of glycerol uptake and metabolism. Catalyzes the phosphorylation of glycerol to yield sn-glycerol 3-phosphate. This is Glycerol kinase from Chelativorans sp. (strain BNC1).